The primary structure comprises 149 residues: Protein SprT-like (149 aa).

The 142-residue stretch at 6-147 folds into the SprT-like domain; the sequence is LQKLTEDISL…CGKCRGKIKR (142 aa). His-67 provides a ligand contact to Zn(2+). Glu-68 is a catalytic residue. His-71 is a Zn(2+) binding site.

This sequence belongs to the SprT family. Zn(2+) serves as cofactor.

The protein resides in the cytoplasm. This chain is Protein SprT-like, found in Bacillus velezensis (strain DSM 23117 / BGSC 10A6 / LMG 26770 / FZB42) (Bacillus amyloliquefaciens subsp. plantarum).